The sequence spans 541 residues: Putative transferase YhbX (541 aa).

Residues 1–60 (MTVFNKFARTFKSHWLLYLCVIVFGITNLVASSGAHMVQRLLFFVLTILVVKRISSLPLR) are Periplasmic-facing. Residues 61–81 (LLVAAPFVLLTAADMSISLYS) traverse the membrane as a helical segment. The Cytoplasmic segment spans residues 82–110 (WCTFGTTFNDGFAISVLQSDPDEVVKMLG). A helical transmembrane segment spans residues 111 to 131 (MYIPYLCAFAFLSLLFLAVII). Topologically, residues 132 to 141 (KYDVSLPTKK) are periplasmic. A helical transmembrane segment spans residues 142-162 (VTGILLLIVISGSLFSACQFA). At 163–264 (YKDAKNKKAF…RKQIKLFNQA (102 aa)) the chain is on the cytoplasmic side. Residues 265 to 285 (ISGAPYTALSVPLSLTADSVL) form a helical membrane-spanning segment. The Periplasmic portion of the chain corresponds to 286-541 (SHDIHNYPDN…QGNPTPEGQG (256 aa)).

It belongs to the phosphoethanolamine transferase family.

It is found in the cell inner membrane. In terms of biological role, probably does not transfer phosphoethanolamine to lipid A. The chain is Putative transferase YhbX (yhbX) from Escherichia coli (strain K12).